Reading from the N-terminus, the 190-residue chain is Small ribosomal subunit protein uS4 (190 aa).

The region spanning 106-178 is the S4 RNA-binding domain; that stretch reads RRLQTVVFKH…GRVKRVKRNA (73 aa). The disordered stretch occupies residues 166 to 190; the sequence is GRPGRVKRVKRNAAKKGSGGGDDDE. Residues 169 to 179 show a composition bias toward basic residues; it reads GRVKRVKRNAA.

It belongs to the universal ribosomal protein uS4 family.

The chain is Small ribosomal subunit protein uS4 from Trypanosoma brucei brucei.